The following is a 161-amino-acid chain: Large ribosomal subunit protein uL16 (161 aa).

Belongs to the universal ribosomal protein uL16 family.

The sequence is that of Large ribosomal subunit protein uL16 from Methanosphaera stadtmanae (strain ATCC 43021 / DSM 3091 / JCM 11832 / MCB-3).